The primary structure comprises 318 residues: Taste receptor type 2 member 117 (318 aa).

At 1–16 (MQHNLKTIFVISHSTL) the chain is on the extracellular side. A helical membrane pass occupies residues 17–37 (TIILFTELVTGIIGNGFMALV). Residues 38-53 (HCMDWLRRKKISLVNQ) are Cytoplasmic-facing. A helical transmembrane segment spans residues 54–74 (ILTALAISRIFQLCLLFISLV). Residues 75–93 (ISFSYPDLTTTSLIKVTCN) are Extracellular-facing. Residues 94 to 114 (LWIIVNHFNIWLATCLGIFYF) traverse the membrane as a helical segment. Topologically, residues 115-134 (LKISNFSNSLFLYLKWRVEK) are cytoplasmic. The chain crosses the membrane as a helical span at residues 135-155 (VVLVTLLVSLVLLTLNSLLIN). The Extracellular segment spans residues 156–189 (LEINICINEYQRNITYSFNSYYHANCHRQMLSLH). An N-linked (GlcNAc...) asparagine glycan is attached at Asn168. Residues 190–210 (IIFLSVPFVLSLSTFLLLIFS) traverse the membrane as a helical segment. The Cytoplasmic segment spans residues 211-238 (LGTHHKKMQQHVQGRRDASTMAHFKALQ). Residues 239 to 259 (TVIAFLLLYSIFILSVLVQIW) form a helical membrane-spanning segment. The Extracellular portion of the chain corresponds to 260–268 (KYELLKKNL). Residues 269–289 (FILFCQVAYVAFPSFHSYILI) form a helical membrane-spanning segment. Residues 290–318 (LGDMKMRQACLSVLWWQKFRKNYVEPLDL) lie on the Cytoplasmic side of the membrane.

This sequence belongs to the G-protein coupled receptor T2R family.

It is found in the membrane. Its function is as follows. Putative taste receptor which may play a role in the perception of bitterness. The protein is Taste receptor type 2 member 117 of Rattus norvegicus (Rat).